A 394-amino-acid chain; its full sequence is Elongation factor Tu 2 (394 aa).

The 195-residue stretch at 10–204 (KPHVNVGTIG…FLDSYIPEPE (195 aa)) folds into the tr-type G domain. A G1 region spans residues 19–26 (GHVDHGKT). A GTP-binding site is contributed by 19 to 26 (GHVDHGKT). T26 is a Mg(2+) binding site. The segment at 60-64 (GITIN) is G2. The segment at 81-84 (DCPG) is G3. Residues 81-85 (DCPGH) and 136-139 (NKCD) contribute to the GTP site. A G4 region spans residues 136-139 (NKCD). The G5 stretch occupies residues 174-176 (SAL).

This sequence belongs to the TRAFAC class translation factor GTPase superfamily. Classic translation factor GTPase family. EF-Tu/EF-1A subfamily. In terms of assembly, monomer.

Its subcellular location is the cytoplasm. It carries out the reaction GTP + H2O = GDP + phosphate + H(+). Its function is as follows. GTP hydrolase that promotes the GTP-dependent binding of aminoacyl-tRNA to the A-site of ribosomes during protein biosynthesis. In Escherichia coli O139:H28 (strain E24377A / ETEC), this protein is Elongation factor Tu 2.